The primary structure comprises 596 residues: UvrABC system protein C (596 aa).

The GIY-YIG domain maps to 14–91; sequence DQPGCYLMKD…IKLHDPKYNV (78 aa). The UVR domain occupies 196-231; that stretch reads EAVKKELEVKMLAAAENLEFERAKEFRDQIAHIDTV.

It belongs to the UvrC family. As to quaternary structure, interacts with UvrB in an incision complex.

The protein resides in the cytoplasm. In terms of biological role, the UvrABC repair system catalyzes the recognition and processing of DNA lesions. UvrC both incises the 5' and 3' sides of the lesion. The N-terminal half is responsible for the 3' incision and the C-terminal half is responsible for the 5' incision. The protein is UvrABC system protein C of Lysinibacillus sphaericus (strain C3-41).